A 400-amino-acid polypeptide reads, in one-letter code: MGGRLPKPRKGMGTNLSVPNPLGFFPDHQLDPAFGANSNNPDWDFNPIKDHWPQANQVGVGAFGPGFTPPHGGVLGWSPQAQGTLTTVPAVPPPASTNRQSGRQPTPISPPLRDSHPQAMQWNSTKFHQTLQDPRVRGLYFPAGGSSSGTVNPAPNIASHISSISSRIGDPAPTMENITSGFLGPLLVLQAGFFLLTRILTIPQSLDSWWTSLNFLGEAPVCLGQNSQSPTSNHSPTSCPPICPGYRWMCLRRFIIFLFILLLCLIFLLVLLDCQGMLPVCPLIPGSTTTSTGPCRTCTTPAQGNSMFPSCCCTKPTDGNCTCIPIPSSWAFAKYLWEWASVRFSWLSLLVPFVQWFVGLSPTVWLSVIWMMWYWGPSLYNILSPFIPLLPIFFCLWVYI.

Methionine 1 carries the N-acetylmethionine modification. Glycine 2 is lipidated: N-myristoyl glycine; by host. The pre-S1 stretch occupies residues 2–119 (GGRLPKPRKG…PPLRDSHPQA (118 aa)). Residues 2 to 174 (GGRLPKPRKG…SSRIGDPAPT (173 aa)) form a pre-S region. Residues 2 to 181 (GGRLPKPRKG…APTMENITSG (180 aa)) lie on the Virion surface; in external conformation side of the membrane. Residues 2 to 253 (GGRLPKPRKG…PGYRWMCLRR (252 aa)) are Intravirion; in internal conformation-facing. Residue arginine 4 is glycosylated (N-linked (GlcNAc...) asparagine). Residues 84-116 (TLTTVPAVPPPASTNRQSGRQPTPISPPLRDSH) form a disordered region. Residues 96–106 (STNRQSGRQPT) show a composition bias toward polar residues. Positions 120–174 (MQWNSTKFHQTLQDPRVRGLYFPAGGSSSGTVNPAPNIASHISSISSRIGDPAPT) are pre-S2. Residues 182–202 (FLGPLLVLQAGFFLLTRILTI) traverse the membrane as a helical segment. Residues 203 to 253 (PQSLDSWWTSLNFLGEAPVCLGQNSQSPTSNHSPTSCPPICPGYRWMCLRR) are Intravirion; in external conformation-facing. A helical transmembrane segment spans residues 254-274 (FIIFLFILLLCLIFLLVLLDC). The Virion surface segment spans residues 275–348 (QGMLPVCPLI…WASVRFSWLS (74 aa)). A glycan (N-linked (GlcNAc...) asparagine; by host) is linked at asparagine 320. Residues 349 to 369 (LLVPFVQWFVGLSPTVWLSVI) form a helical membrane-spanning segment. Residues 370 to 375 (WMMWYW) are Intravirion-facing. A helical transmembrane segment spans residues 376–398 (GPSLYNILSPFIPLLPIFFCLWV). Over 399–400 (YI) the chain is Virion surface.

Belongs to the orthohepadnavirus major surface antigen family. In its internal form (Li-HBsAg), interacts with the capsid protein and with the isoform S. Interacts with host chaperone CANX. In terms of assembly, associates with host chaperone CANX through its pre-S2 N glycan; this association may be essential for isoform M proper secretion. As to quaternary structure, interacts with isoform L. Interacts with the antigens of satellite virus HDV (HDVAgs); this interaction is required for encapsidation of HDV genomic RNA. Post-translationally, isoform M is N-terminally acetylated by host at a ratio of 90%, and N-glycosylated by host at the pre-S2 region. Myristoylated.

The protein localises to the virion membrane. The large envelope protein exists in two topological conformations, one which is termed 'external' or Le-HBsAg and the other 'internal' or Li-HBsAg. In its external conformation the protein attaches the virus to cell receptors and thereby initiating infection. This interaction determines the species specificity and liver tropism. This attachment induces virion internalization predominantly through caveolin-mediated endocytosis. The large envelope protein also assures fusion between virion membrane and endosomal membrane. In its internal conformation the protein plays a role in virion morphogenesis and mediates the contact with the nucleocapsid like a matrix protein. In terms of biological role, the middle envelope protein plays an important role in the budding of the virion. It is involved in the induction of budding in a nucleocapsid independent way. In this process the majority of envelope proteins bud to form subviral lipoprotein particles of 22 nm of diameter that do not contain a nucleocapsid. This Hepatitis B virus genotype A3 (isolate Cameroon/CMR711/1994) (HBV-A) protein is Large envelope protein.